The following is a 450-amino-acid chain: ATP-dependent protease ATPase subunit HslU (450 aa).

Residues V29, 71–76, D261, E328, and R400 each bind ATP; that span reads GVGKTE.

The protein belongs to the ClpX chaperone family. HslU subfamily. As to quaternary structure, a double ring-shaped homohexamer of HslV is capped on each side by a ring-shaped HslU homohexamer. The assembly of the HslU/HslV complex is dependent on binding of ATP.

It localises to the cytoplasm. Its function is as follows. ATPase subunit of a proteasome-like degradation complex; this subunit has chaperone activity. The binding of ATP and its subsequent hydrolysis by HslU are essential for unfolding of protein substrates subsequently hydrolyzed by HslV. HslU recognizes the N-terminal part of its protein substrates and unfolds these before they are guided to HslV for hydrolysis. This chain is ATP-dependent protease ATPase subunit HslU, found in Rickettsia conorii (strain ATCC VR-613 / Malish 7).